The sequence spans 344 residues: Succinylglutamate desuccinylase (344 aa).

Zn(2+) contacts are provided by histidine 63, glutamate 66, and histidine 160. Residue glutamate 224 is part of the active site.

This sequence belongs to the AspA/AstE family. Succinylglutamate desuccinylase subfamily. Zn(2+) is required as a cofactor.

The enzyme catalyses N-succinyl-L-glutamate + H2O = L-glutamate + succinate. Its pathway is amino-acid degradation; L-arginine degradation via AST pathway; L-glutamate and succinate from L-arginine: step 5/5. Transforms N(2)-succinylglutamate into succinate and glutamate. The sequence is that of Succinylglutamate desuccinylase from Shewanella baltica (strain OS223).